The sequence spans 111 residues: Colipase (111 aa).

A signal peptide spans 1 to 16 (MKVLVLLLVTLAVVYA). The propeptide at 17–21 (APDPR) is enterostatin, activation peptide. 5 disulfide bridges follow: Cys33–Cys44, Cys39–Cys55, Cys43–Cys77, Cys65–Cys85, and Cys79–Cys103.

This sequence belongs to the colipase family. Forms a 1:1 stoichiometric complex with pancreatic lipase. As to expression, expressed by the pancreas.

The protein localises to the secreted. Its function is as follows. Colipase is a cofactor of pancreatic lipase. It allows the lipase to anchor itself to the lipid-water interface. Without colipase the enzyme is washed off by bile salts, which have an inhibitory effect on the lipase. Enterostatin has a biological activity as a satiety signal. This is Colipase (CLPS) from Ictidomys tridecemlineatus (Thirteen-lined ground squirrel).